A 579-amino-acid polypeptide reads, in one-letter code: CTP synthase (579 aa).

Residues 310–558 (YVELHDAYLS…VAAAIGCLDQ (249 aa)) enclose the Glutamine amidotransferase type-1 domain. Catalysis depends on for GATase activity residues Cys402, His531, and Glu533.

This sequence belongs to the CTP synthase family.

It catalyses the reaction UTP + L-glutamine + ATP + H2O = CTP + L-glutamate + ADP + phosphate + 2 H(+). The protein operates within pyrimidine metabolism; CTP biosynthesis via de novo pathway; CTP from UDP: step 2/2. In terms of biological role, catalyzes the ATP-dependent amination of UTP to CTP with either L-glutamine or ammonia as the source of nitrogen. The polypeptide is CTP synthase (pyr-7) (Neurospora crassa (strain ATCC 24698 / 74-OR23-1A / CBS 708.71 / DSM 1257 / FGSC 987)).